Here is a 269-residue protein sequence, read N- to C-terminus: Type II iodothyronine deiodinase (269 aa).

Residues 1–7 are Lumenal-facing; that stretch reads MGLLSVD. The chain crosses the membrane as a helical; Signal-anchor for type III membrane protein span at residues 8–28; the sequence is LLITLQILPWFFSNCLFLALY. The Cytoplasmic segment spans residues 29–269; sequence DSVVLLKHVI…RUVPTCELIM (241 aa). Selenocysteine 128 is a catalytic residue. 2 non-standard amino acids (selenocysteine) are found at residues selenocysteine 128 and selenocysteine 261.

It belongs to the iodothyronine deiodinase family. As to quaternary structure, predominantly monomer. Can form homodimers but homodimerization is not essential for enzyme activity.

It localises to the endoplasmic reticulum membrane. The enzyme catalyses 3,3',5-triiodo-L-thyronine + iodide + A + H(+) = L-thyroxine + AH2. It catalyses the reaction 3,3'-diiodo-L-thyronine + iodide + A + H(+) = 3,3',5'-triiodo-L-thyronine + AH2. It carries out the reaction 3'-iodo-L-thyronine + iodide + A + H(+) = 3',5'-diiodo-L-thyronine + AH2. The catalysed reaction is 3,3'-diiodothyronamine + iodide + A + H(+) = 3,3',5'-triiodothyronamine + AH2. The enzyme catalyses 3'-iodothyronamine + iodide + A + H(+) = 3',5'-diiodothyronamine + AH2. Functionally, plays a crucial role in the metabolism of thyroid hormones (TH) and has specific roles in TH activation and inactivation by deiodination. Catalyzes the deiodination of L-thyroxine (T4) to 3,5,3'-triiodothyronine (T3), 3,3',5'-triiodothyronine (rT3) to 3,3'-diiodothyronine (3,3'-T2) and 3',5'-diiodothyronine (3',5'-T2) to 3'-monoiodothyronine (3'-T1) via outer-ring deiodination (ORD). Catalyzes the phenolic ring deiodinations of 3,3',5'-triiodothyronamine and 3',5'- diiodothyronamine. This is Type II iodothyronine deiodinase (dio2) from Neoceratodus forsteri (Australian lungfish).